The chain runs to 805 residues: Mediator of RNA polymerase II transcription subunit 25 (805 aa).

Disordered regions lie at residues 430 to 455 and 786 to 805; these read GSAQ…GQTV and SQSQ…GFMN. 2 stretches are compositionally biased toward low complexity: residues 438–451 and 786–795; these read SAPS…PSMS and SQSQGSSQGL.

It belongs to the Mediator complex subunit 25 family. Interacts with MYC2 (via N-terminus). MED25 competes with JAZ7 for binding to MYC2.

Functionally, component of the Mediator complex, a coactivator involved in the regulated transcription of nearly all RNA polymerase II-dependent genes. Mediator functions as a bridge to convey information from gene-specific regulatory proteins to the basal RNA polymerase II transcription machinery. Mediator is recruited to promoters by direct interactions with regulatory proteins and serves as a scaffold for the assembly of a functional pre-initiation complex with RNA polymerase II and the general transcription factors. Plays a positive role in wound-induced activation of jasmonate-responsive genes whose promoters are targeted by MYC2. The chain is Mediator of RNA polymerase II transcription subunit 25 from Solanum lycopersicum (Tomato).